Here is a 365-residue protein sequence, read N- to C-terminus: MSNNPTFGVEEEFLLVDPRTGEPIARNKAVAETAAAKGVDLQLELTSCQVETATEVMDNSDDLRKALLRLRRVATDAAETNGARLLAAGLPPTVPHKFPITPTPRYRRIGHRFGMIAHEQGICGCHVHVEVPSRDAAIRVSNRLRPWLHLLLALTANSAIYRGSDSGYATFRSVLWARWPSAGPPPFFDSEAQYDATVAMLEDAGAALDDGMIYWDVRPSNKFPTVEVRVSDVPATVAETVLFATLVRAAVMTATEAEKNGEPVVPLTDYVLKAAYWKSARDGLDGRTIDLAESHAVAPTVELLTNFVEHLRPALEQLGEYDTVRGELARVIETGNGAMRQRRAFERRREAADVIDELAAATIAE.

The protein belongs to the glutamate--cysteine ligase type 2 family. YbdK subfamily.

The catalysed reaction is L-cysteine + L-glutamate + ATP = gamma-L-glutamyl-L-cysteine + ADP + phosphate + H(+). Functionally, ATP-dependent carboxylate-amine ligase which exhibits weak glutamate--cysteine ligase activity. This is Putative glutamate--cysteine ligase 2-3 from Mycolicibacterium smegmatis (strain ATCC 700084 / mc(2)155) (Mycobacterium smegmatis).